The primary structure comprises 443 residues: Light-independent protochlorophyllide reductase subunit N (443 aa).

Residues Cys15, Cys40, and Cys99 each coordinate [4Fe-4S] cluster.

The protein belongs to the BchN/ChlN family. Protochlorophyllide reductase is composed of three subunits; BchL, BchN and BchB. Forms a heterotetramer of two BchB and two BchN subunits. [4Fe-4S] cluster serves as cofactor.

The enzyme catalyses chlorophyllide a + oxidized 2[4Fe-4S]-[ferredoxin] + 2 ADP + 2 phosphate = protochlorophyllide a + reduced 2[4Fe-4S]-[ferredoxin] + 2 ATP + 2 H2O. It functions in the pathway porphyrin-containing compound metabolism; bacteriochlorophyll biosynthesis (light-independent). In terms of biological role, component of the dark-operative protochlorophyllide reductase (DPOR) that uses Mg-ATP and reduced ferredoxin to reduce ring D of protochlorophyllide (Pchlide) to form chlorophyllide a (Chlide). This reaction is light-independent. The NB-protein (BchN-BchB) is the catalytic component of the complex. The chain is Light-independent protochlorophyllide reductase subunit N from Heliobacterium modesticaldum (strain ATCC 51547 / Ice1).